Consider the following 85-residue polypeptide: Large ribosomal subunit protein bL27 (85 aa).

Belongs to the bacterial ribosomal protein bL27 family.

The protein is Large ribosomal subunit protein bL27 of Variovorax paradoxus (strain S110).